A 598-amino-acid polypeptide reads, in one-letter code: NADH-quinone oxidoreductase subunit C/D (598 aa).

The tract at residues Met1 to Glu189 is NADH dehydrogenase I subunit C. The tract at residues Asp213 to Arg598 is NADH dehydrogenase I subunit D.

This sequence in the N-terminal section; belongs to the complex I 30 kDa subunit family. In the C-terminal section; belongs to the complex I 49 kDa subunit family. In terms of assembly, NDH-1 is composed of 13 different subunits. Subunits NuoB, CD, E, F, and G constitute the peripheral sector of the complex.

Its subcellular location is the cell inner membrane. It catalyses the reaction a quinone + NADH + 5 H(+)(in) = a quinol + NAD(+) + 4 H(+)(out). NDH-1 shuttles electrons from NADH, via FMN and iron-sulfur (Fe-S) centers, to quinones in the respiratory chain. The immediate electron acceptor for the enzyme in this species is believed to be ubiquinone. Couples the redox reaction to proton translocation (for every two electrons transferred, four hydrogen ions are translocated across the cytoplasmic membrane), and thus conserves the redox energy in a proton gradient. The chain is NADH-quinone oxidoreductase subunit C/D from Yersinia pestis bv. Antiqua (strain Angola).